The chain runs to 386 residues: Ribosomal RNA small subunit methyltransferase H (386 aa).

S-adenosyl-L-methionine contacts are provided by residues 97–99 (GGH), aspartate 116, tyrosine 143, aspartate 167, and glutamine 174.

This sequence belongs to the methyltransferase superfamily. RsmH family.

It localises to the cytoplasm. It catalyses the reaction cytidine(1402) in 16S rRNA + S-adenosyl-L-methionine = N(4)-methylcytidine(1402) in 16S rRNA + S-adenosyl-L-homocysteine + H(+). Its function is as follows. Specifically methylates the N4 position of cytidine in position 1402 (C1402) of 16S rRNA. This Mycobacterium avium (strain 104) protein is Ribosomal RNA small subunit methyltransferase H.